The chain runs to 533 residues: Protein disulfide isomerase-like 1-5 (533 aa).

The signal sequence occupies residues 1–22; it reads MRARRVVAAAAVLLLFAVVAVA. 2 Thioredoxin domains span residues 51–196 and 387–516; these read LGGG…KDQT and LLEG…EKLQ. The active-site Nucleophile is C97. Residue N151 is glycosylated (N-linked (GlcNAc...) asparagine). Residues C436 and C439 each act as nucleophile in the active site. C436 and C439 are joined by a disulfide. The Prevents secretion from ER signature appears at 530-533; that stretch reads KDEL.

The protein belongs to the protein disulfide isomerase family.

The protein resides in the endoplasmic reticulum lumen. It catalyses the reaction Catalyzes the rearrangement of -S-S- bonds in proteins.. In terms of biological role, acts as a protein-folding catalyst that interacts with nascent polypeptides to catalyze the formation, isomerization, and reduction or oxidation of disulfide bonds. May play a role in storage protein biogenesis. The polypeptide is Protein disulfide isomerase-like 1-5 (PDIL1-5) (Oryza sativa subsp. japonica (Rice)).